The primary structure comprises 593 residues: Copine-5 (593 aa).

Residues 2-134 (EQPEDMASLS…SPGSRLEKPL (133 aa)) form the C2 1 domain. At S19 the chain carries Phosphoserine. D38, D44, D98, D100, S103, K108, and D110 together coordinate Ca(2+). S103 carries the post-translational modification Phosphoserine. S140 bears the Phosphoserine mark. In terms of domain architecture, C2 2 spans 161–284 (KCGTIILSAE…ARGQSQFNIY (124 aa)). 5 residues coordinate Ca(2+): D192, D198, D254, D256, and D262. The region spanning 328–554 (NFTVAIDFTA…DVLAEIPDQL (227 aa)) is the VWFA domain. Positions 562 to 593 (GIRPRPPPAAPTHSPSQSPARTPPASPLHTHI) are disordered. Residues 572–581 (PTHSPSQSPA) are compositionally biased toward low complexity.

Belongs to the copine family. It depends on Ca(2+) as a cofactor. In terms of tissue distribution, expressed in the brain, heart, stomach, spleen, lymph node and testis. Expressed in melanocytes.

It localises to the perikaryon. It is found in the cell projection. Its function is as follows. Probable calcium-dependent phospholipid-binding protein that may play a role in calcium-mediated intracellular processes. Plays a role in dendrite formation by melanocytes. In Homo sapiens (Human), this protein is Copine-5.